Here is a 101-residue protein sequence, read N- to C-terminus: MFLTGDTSPAEDNREATLPQCSLPELYACIENFNKESKKSNLLKMHGISLNEAQEVLARNLNVMSFTRGADVRGDLQPVISVNKMNKPGKHRKTPSPKINK.

This is an uncharacterized protein from Homo sapiens (Human).